Reading from the N-terminus, the 695-residue chain is MAP kinase phosphatase with leucine-rich repeats protein 2 (695 aa).

LRR repeat units lie at residues 101–122, 124–145, 147–167, 170–191, 193–214, 215–235, 239–260, 262–283, 286–307, and 309–330; these read SLKS…ITLL, NLNH…LSQL, SLET…NVCK, SLTS…FLNL, NLKD…LPNN, IEKL…SLIR, SLTT…LSCL, NVKT…VLGS, SLVT…VILL, and NLRI…IPTE. Over residues 413–426 the composition is skewed to low complexity; it reads SENNEINENNQLLT. Disordered stretches follow at residues 413–438 and 492–519; these read SENN…KNDS and QEQL…QQQQ. In terms of domain architecture, Tyrosine-protein phosphatase spans 556 to 695; it reads VPDLIIDKLY…LKKFEKDLFK (140 aa). Residue Cys-639 is the Phosphocysteine intermediate of the active site.

This sequence belongs to the protein-tyrosine phosphatase family. Non-receptor class dual specificity subfamily.

The catalysed reaction is O-phospho-L-tyrosyl-[protein] + H2O = L-tyrosyl-[protein] + phosphate. It catalyses the reaction O-phospho-L-seryl-[protein] + H2O = L-seryl-[protein] + phosphate. It carries out the reaction O-phospho-L-threonyl-[protein] + H2O = L-threonyl-[protein] + phosphate. Its function is as follows. Probable phosphatase with dual specificity toward Ser/Thr and Tyr-containing proteins. This chain is MAP kinase phosphatase with leucine-rich repeats protein 2 (mpl2), found in Dictyostelium discoideum (Social amoeba).